Consider the following 1438-residue polypeptide: DNA polymerase III PolC-type (1438 aa).

Positions 422–578 constitute an Exonuclease domain; it reads YVVFDVETTG…YDTEATAYIF (157 aa).

This sequence belongs to the DNA polymerase type-C family. PolC subfamily.

Its subcellular location is the cytoplasm. It catalyses the reaction DNA(n) + a 2'-deoxyribonucleoside 5'-triphosphate = DNA(n+1) + diphosphate. Its function is as follows. Required for replicative DNA synthesis. This DNA polymerase also exhibits 3' to 5' exonuclease activity. This is DNA polymerase III PolC-type from Staphylococcus aureus (strain Mu3 / ATCC 700698).